Reading from the N-terminus, the 302-residue chain is tRNA dimethylallyltransferase (302 aa).

9-16 is a binding site for ATP; that stretch reads GPTGTGKS. A substrate-binding site is contributed by 11–16; the sequence is TGTGKS.

This sequence belongs to the IPP transferase family. As to quaternary structure, monomer. The cofactor is Mg(2+).

The catalysed reaction is adenosine(37) in tRNA + dimethylallyl diphosphate = N(6)-dimethylallyladenosine(37) in tRNA + diphosphate. Its function is as follows. Catalyzes the transfer of a dimethylallyl group onto the adenine at position 37 in tRNAs that read codons beginning with uridine, leading to the formation of N6-(dimethylallyl)adenosine (i(6)A). The chain is tRNA dimethylallyltransferase from Mycolicibacterium smegmatis (strain ATCC 700084 / mc(2)155) (Mycobacterium smegmatis).